A 153-amino-acid polypeptide reads, in one-letter code: 3-hydroxyacyl-[acyl-carrier-protein] dehydratase FabZ (153 aa).

Histidine 57 is a catalytic residue.

It belongs to the thioester dehydratase family. FabZ subfamily.

It localises to the cytoplasm. The catalysed reaction is a (3R)-hydroxyacyl-[ACP] = a (2E)-enoyl-[ACP] + H2O. Its function is as follows. Involved in unsaturated fatty acids biosynthesis. Catalyzes the dehydration of short chain beta-hydroxyacyl-ACPs and long chain saturated and unsaturated beta-hydroxyacyl-ACPs. The chain is 3-hydroxyacyl-[acyl-carrier-protein] dehydratase FabZ from Xanthomonas campestris pv. campestris (strain 8004).